Reading from the N-terminus, the 100-residue chain is Enhancer of yellow 2 transcription factor (100 aa).

It belongs to the ENY2 family. Component of the nuclear pore complex (NPC)-associated AMEX complex (anchoring and mRNA export complex), composed of at least e(y)2 and xmas-2. Component of the SAGA transcription coactivator-HAT complexes, at least composed of Ada2b, e(y)2, Pcaf/Gcn5, Taf10 and Nipped-A/Trrap. Within the SAGA complex, e(y)2, Sgf11, and not/nonstop form an additional subcomplex of SAGA called the DUB module (deubiquitination module). Component of the THO complex, composed of at least e(y)2, HPR1, THO2, THOC5, THOC6 and THOC7. Interacts with e(y)1. Interacts with su(Hw) (via zinc fingers). Interacts with xmas-2; required for localization to the nuclear periphery. Interacts with the nuclear pore complex (NPC).

The protein resides in the nucleus. The protein localises to the nucleoplasm. It is found in the cytoplasm. Functionally, involved in mRNA export coupled transcription activation by association with both the AMEX and the SAGA complexes. The SAGA complex is a multiprotein complex that activates transcription by remodeling chromatin and mediating histone acetylation and deubiquitination. Within the SAGA complex, participates in a subcomplex that specifically deubiquitinates histone H2B. The SAGA complex is recruited to specific gene promoters by activators, where it is required for transcription. Required for nuclear receptor-mediated transactivation. Involved in transcription elongation by recruiting the THO complex onto nascent mRNA. The AMEX complex functions in docking export-competent ribonucleoprotein particles (mRNPs) to the nuclear entrance of the nuclear pore complex (nuclear basket). AMEX participates in mRNA export and accurate chromatin positioning in the nucleus by tethering genes to the nuclear periphery. The polypeptide is Enhancer of yellow 2 transcription factor (Drosophila persimilis (Fruit fly)).